The chain runs to 350 residues: 4-hydroxy-2-oxovalerate aldolase 2 (350 aa).

The Pyruvate carboxyltransferase domain maps to 8–260 (ITVHDMTLRD…ETGVDVFKIQ (253 aa)). 16 to 17 (RD) contacts substrate. Asp-17 lines the Mn(2+) pocket. His-20 functions as the Proton acceptor in the catalytic mechanism. Residues Ser-170 and His-199 each contribute to the substrate site. Residues His-199 and His-201 each contribute to the Mn(2+) site. Tyr-290 contacts substrate.

It belongs to the 4-hydroxy-2-oxovalerate aldolase family.

It catalyses the reaction (S)-4-hydroxy-2-oxopentanoate = acetaldehyde + pyruvate. The chain is 4-hydroxy-2-oxovalerate aldolase 2 (tesG) from Comamonas testosteroni (Pseudomonas testosteroni).